The following is a 93-amino-acid chain: Protein S100-A5 (93 aa).

2 EF-hand domains span residues 12–47 (MVTT…LAEK) and 48–83 (MKES…LCMA). Thr28, Glu33, Asp61, Asn63, Asp65, Glu67, and Glu72 together coordinate Ca(2+).

The protein belongs to the S-100 family. As to quaternary structure, homodimer.

In terms of biological role, binds calcium, zinc and copper. One subunit can simultaneously bind 2 calcium ions or 2 copper ions plus 1 zinc ion. Calcium and copper ions compete for the same binding sites. This Mus musculus (Mouse) protein is Protein S100-A5 (S100a5).